The chain runs to 360 residues: Ferredoxin--NADP reductase, leaf isozyme, chloroplastic (360 aa).

The N-terminal 52 residues, 1-52, are a transit peptide targeting the chloroplast; that stretch reads MAAAVTAAVSLPYSNSTSLPIRTSIVAPERLVFKKVSLNNVSISGRVGTIRA. One can recognise an FAD-binding FR-type domain in the interval 81 to 203; the sequence is KEPYVGRCLL…TGPVGKEMLM (123 aa). FAD-binding positions include 139–142, 160–162, Tyr-166, 177–179, and Thr-218; these read RLYS, CVK, and VCS. NADP(+) is bound by residues Ser-142 and Lys-162. Residues Thr-218, 250–251, 280–281, Lys-290, 319–320, and Glu-358 each bind NADP(+); these read VP, SR, and GL.

The protein belongs to the ferredoxin--NADP reductase type 1 family. As to quaternary structure, monomer. Interacts with TIC62 (via C-terminus). FAD serves as cofactor.

It localises to the plastid. The protein localises to the chloroplast stroma. It is found in the chloroplast thylakoid membrane. The enzyme catalyses 2 reduced [2Fe-2S]-[ferredoxin] + NADP(+) + H(+) = 2 oxidized [2Fe-2S]-[ferredoxin] + NADPH. The protein operates within energy metabolism; photosynthesis. Its function is as follows. May play a key role in regulating the relative amounts of cyclic and non-cyclic electron flow to meet the demands of the plant for ATP and reducing power. This Pisum sativum (Garden pea) protein is Ferredoxin--NADP reductase, leaf isozyme, chloroplastic (PETH).